A 168-amino-acid polypeptide reads, in one-letter code: Glycine-rich RNA-binding protein 2 (168 aa).

Residues 8–86 form the RRM domain; the sequence is YRCFVGGLAW…RNITVNQAQS (79 aa). The interval 148–168 is disordered; it reads GYGGGGGYGGNRGDSGGNWRN.

In terms of biological role, possibly has a role in RNA transcription or processing during stress. The sequence is that of Glycine-rich RNA-binding protein 2 (GRP2) from Sorghum bicolor (Sorghum).